The chain runs to 148 residues: UPF0134 protein MPN_204 (148 aa).

This sequence belongs to the UPF0134 family.

The sequence is that of UPF0134 protein MPN_204 from Mycoplasma pneumoniae (strain ATCC 29342 / M129 / Subtype 1) (Mycoplasmoides pneumoniae).